The primary structure comprises 475 residues: Peroxisome proliferator-activated receptor gamma (475 aa).

T54 is a glycosylation site (O-linked (GlcNAc) threonine). S82 bears the Phosphoserine; by MAPK mark. The nuclear receptor DNA-binding region spans 106–180; sequence AIECRVCGDK…VGMSHNAIRF (75 aa). 2 NR C4-type zinc fingers span residues 109 to 129 and 146 to 168; these read CRVCGDKASGFHYGVHACEGC and CDLNCRIHKKSRNKCQYCRFQKC. Positions 175–250 are interaction with FAM120B; it reads HNAIRFGRMP…DKSPFVIYDM (76 aa). Positions 208 to 473 constitute an NR LBD domain; the sequence is DLRALAKHLY…HPLLQEIYKD (266 aa). K222 participates in a covalent cross-link: Glycyl lysine isopeptide (Lys-Gly) (interchain with G-Cter in ubiquitin). The short motif at 465 to 473 is the 9aaTAD element; that stretch reads PLLQEIYKD.

The protein belongs to the nuclear hormone receptor family. NR1 subfamily. As to quaternary structure, interacts with FOXO1 (acetylated form). Heterodimer with other nuclear receptors, such as RXRA. The heterodimer with the retinoic acid receptor RXRA is called adipocyte-specific transcription factor ARF6. Interacts with NCOA6 coactivator, leading to a strong increase in transcription of target genes. Interacts with coactivator PPARBP, leading to a mild increase in transcription of target genes. Interacts with NOCA7 in a ligand-inducible manner. Interacts with NCOA1 and NCOA2 LXXLL motifs. Interacts with ASXL1, ASXL2, DNTTIP2, FAM120B, MAP2K1/MEK1, NR0B2, PDPK1, PRDM16, PRMT2 and TGFB1I1. Interacts (when activated by agonist) with PPP5C. Interacts with HELZ2 and THRAP3; the interaction stimulates the transcriptional activity of PPARG. Interacts with PER2, the interaction is ligand dependent and blocks PPARG recruitment to target promoters. Interacts with NOCT. Interacts with ACTN4. Interacts (when in the liganded conformation) with GPS2. Interacts with CRY1 and CRY2 in a ligand-dependent manner. In the absence of hormonal ligand, interacts with TACC1. In macrophages, interacts with PAQR3 and STUB1; the interactions promote PPARG poylubiquitination and STUB1-mediated degradation. Post-translationally, O-GlcNAcylation at Thr-54 reduces transcriptional activity in adipocytes. Phosphorylated at basal conditions and dephosphorylated when treated with the ligand. May be dephosphorylated by PPP5C. The phosphorylated form may be inactive and dephosphorylation induces adipogenic activity. In terms of processing, ubiquitinated by E3 ubiquitin-protein ligase complex containing FBXO9; leading to proteasomal degradation. Ubiquitinated at Lys-222 by TRIM55 leading to proteasomal degradation. Ubiquitinated by E3 ubiquitin-protein ligase STUB1/CHIP; leading to proteasomal degradation.

The protein resides in the nucleus. The protein localises to the cytoplasm. With respect to regulation, PDPK1 activates its transcriptional activity independently of its kinase activity. Interacts with HELZ2 and THRAP3; the interaction enhances the transcriptional activity of PPARG. Functionally, nuclear receptor that binds peroxisome proliferators such as hypolipidemic drugs and fatty acids. Once activated by a ligand, the nuclear receptor binds to DNA specific PPAR response elements (PPRE) and modulates the transcription of its target genes, such as acyl-CoA oxidase. It therefore controls the peroxisomal beta-oxidation pathway of fatty acids. Key regulator of adipocyte differentiation and glucose homeostasis. ARF6 acts as a key regulator of the tissue-specific adipocyte P2 (aP2) enhancer. Acts as a critical regulator of gut homeostasis by suppressing NF-kappa-B-mediated pro-inflammatory responses. Plays a role in the regulation of cardiovascular circadian rhythms by regulating the transcription of BMAL1 in the blood vessels. This Cricetulus griseus (Chinese hamster) protein is Peroxisome proliferator-activated receptor gamma (PPARG).